Consider the following 1905-residue polypeptide: MAAAQGLLFWLLLLGPPCRVPGQPEQDPGRRFSQFKLCADEECCMLMYRGEALEDFTGPDCRFVNFKKGDTVYVYYKLAGGSPEVWAGSVGHTFGYFPKDLIQVVHEYTQEELQVPTDETDFVCFDGGRDDFDNYNVEDLLGFLELYDSATEDSEKVKEKTAQRVEEPPEASNESDAEPEPGEPNSEESESVLSENTAELRERSEAQKSHPQVNSQTGHAQGERTSFESFGEMLQDKLKVPDSENNKTSNSSQVSHEQEKIDAYKLLKTEMTLDLKTKFGSTADALVSDDETTRLVTSLEDDFVEDLDPEYYTVGKEEEENKEDFDELPLLTFTDGEDTKSPGHSGIEKHPTEKEQNSNKEHKVEETQPPGIKKGDKEIPKHREDTVFSDVMEGEENTDTDLESSDSKEEDDPLVMDSRLGKPRPEDHTDPEKAADHLVNVEVPKADSDDDPEVGAGLHMKDKGRKVEEPRRDWVQHEVGLEDETQEDQAVQGSSQSGHLRSSPAAEKSTETLKSAFANQENDLKGAAVHISKEMLHEEKPSGRSLEGASKSDSVPQAKAAGNQGEEGKTEREPVGVAAPSGDHQPNASKDSVDEVDGSISGPKPHVLSGEHPSAELIKDRLLKLQNQTRFSSPDDMGLPGDLEKKRPILERKLSWQQGGVAAAVNKQVSEKRELPEEEVTRVTKDASDEGQEVRKTGQTDSIEGRGFRPKEPNPEDEDYSPEELLEDENAVSAKQSKERSPEIQDKRLDVDLQNPEKPVSGAIKTDPETEKNKEETRHVSENERKNETAGKAVDSLGRDAGGPVVEKEGSSPVHQKVQRPSEGSDVPGKKQNQTPELGEASQKKDPDYLKEDNHEGHPKTSGLMEKPGVEPSKEDDEHAEKFVDPGSRGSASEDPDDDPFPWAPHAPVQPEESVHLEDLPIISSFFKDQQSLQRFQKYFDIHKLEAMFQDMSSKLKSAQRESLPYNVEKVLDKVFRAWESHILTEAENMLDARVTENRDLETKDSSVFEEAAVLDDVQDLIYFVRYKHSTVEETAPPAAAQPVEGGWDGPAEDTQPPLEENFPQEHMEVPLMQIPKEPGHLAQPVTRDMGTSGVAQKPQTEEDGDPGIITPQGTPVDADDAQKQLAANTEEPASVTPLENAIAFIYSLVFHLTKTLLATLPDDVQPGPDFYGLPWKPVLITASLGIVSFAVFFWRTVLAVKSRVYQVTEQQISEKLKNIMKENAELVQKLSSYEQKIKESKKHVQETKKQNMILSDEAIKFKDKIKSLEETNEILGDTAKSLRAMLESEREQNAKNQDLISENKKSIEKLKDVISVNASEFSEVQIALNEAKLSEEKVKSECHRVQEENARLKKKKEQLQQEIKDWSKSHAELSEQIRSFEKSQKDLEVALTHKDDNINALTNCITQLNRLDCESESEDQNKGGSESDELANGEVGGDRSEKVKNQIKQMMDVSRTQTAISVVEEDLKLLQCKLRASMSTKCNLEDQIKKLEEDRSSLQSAKTVLEDECKTLRQKVEILNELYQQKEMALQKKLSQEEYERQEREQRLSAADEKAVLAAEEVKTYKRRIEEMEDELQKTERSFKNQIATHEKKAHDNWLKARAAERAIAEEKREAANLRHKLLELTQKMAMMQEEPVIVKPMPGRPNTQNPPRRGPLSQNGSFGPSPVSGGECSPPLTADPPARPLSATLNRREMPRSEFGSVDGPLPRPRWASEASGKPSASDPESGAAPTVNSSSRSSSPSKVMDEGKVSMAAKGPPPFPGTPLMSSPVGGPLLPPIRYGPPPQLCGPFGPRPLPPPFGPGMRPPLGLREYAPGVPPGKRDLPLDPREFLPPGHAPFRPLGSLGPREYFFPGTRLPPPNHGPQDYPPSSAARDLPPSGSRDEPPPASQGASQDCSPALKQSP.

Positions 1–22 (MAAAQGLLFWLLLLGPPCRVPG) are cleaved as a signal peptide. At 23–1141 (QPEQDPGRRF…EPASVTPLEN (1119 aa)) the chain is on the lumenal side. The region spanning 45–107 (MLMYRGEALE…PKDLIQVVHE (63 aa)) is the SH3 domain. The span at 154–167 (SEKVKEKTAQRVEE) shows a compositional bias: basic and acidic residues. 2 disordered regions span residues 154–259 (SEKV…HEQE) and 313–621 (TVGK…IKDR). Asparagine 173 carries an N-linked (GlcNAc...) asparagine glycan. The segment covering 173 to 190 (NESDAEPEPGEPNSEESE) has biased composition (acidic residues). The segment covering 198–208 (AELRERSEAQK) has biased composition (basic and acidic residues). The span at 209 to 220 (SHPQVNSQTGHA) shows a compositional bias: polar residues. Phosphoserine is present on residues serine 226 and serine 229. Residues 234–245 (LQDKLKVPDSEN) show a composition bias toward basic and acidic residues. Asparagine 246 carries N-linked (GlcNAc...) asparagine glycosylation. Positions 246 to 255 (NKTSNSSQVS) are enriched in polar residues. Acidic residues predominate over residues 317-327 (EEEENKEDFDE). Basic and acidic residues-rich tracts occupy residues 337–366 (EDTKSPGHSGIEKHPTEKEQNSNKEHKVEE) and 373–386 (KKGDKEIPKHREDT). The span at 392 to 414 (MEGEENTDTDLESSDSKEEDDPL) shows a compositional bias: acidic residues. Basic and acidic residues-rich tracts occupy residues 419–436 (RLGKPRPEDHTDPEKAAD) and 459–480 (HMKDKGRKVEEPRRDWVQHEVG). Residues 467 to 527 (VEEPRRDWVQ…ANQENDLKGA (61 aa)) are a coiled coil. A compositionally biased stretch (polar residues) spans 488–500 (DQAVQGSSQSGHL). Positions 531–542 (ISKEMLHEEKPS) are enriched in basic and acidic residues. Asparagine 627 carries an N-linked (GlcNAc...) asparagine glycan. Disordered regions lie at residues 657–908 (QQGG…PHAP), 1036–1059 (APPAAAQPVEGGWDGPAEDTQPPL), and 1085–1118 (PVTRDMGTSGVAQKPQTEEDGDPGIITPQGTPVD). Residues 669-714 (VSEKRELPEEEVTRVTKDASDEGQEVRKTGQTDSIEGRGFRPKEPN) are compositionally biased toward basic and acidic residues. Residues 715-730 (PEDEDYSPEELLEDEN) show a composition bias toward acidic residues. 4 stretches are compositionally biased toward basic and acidic residues: residues 736–751 (QSKERSPEIQDKRLDV), 766–789 (TDPETEKNKEETRHVSENERKNET), 842–859 (SQKKDPDYLKEDNHEGHP), and 868–884 (PGVEPSKEDDEHAEKFV). Serine 873 is modified (phosphoserine). Residues 1142–1162 (AIAFIYSLVFHLTKTLLATLP) lie within the membrane without spanning it. The Lumenal segment spans residues 1163–1173 (DDVQPGPDFYG). The chain crosses the membrane as a helical span at residues 1174 to 1194 (LPWKPVLITASLGIVSFAVFF). Topologically, residues 1195-1905 (WRTVLAVKSR…DCSPALKQSP (711 aa)) are cytoplasmic. The tract at residues 1208–1647 (VTEQQISEKL…VIVKPMPGRP (440 aa)) is mediates interaction with MIA2. The stretch at 1211-1393 (QQISEKLKNI…SQKDLEVALT (183 aa)) forms a coiled coil. Residues 1416–1443 (SESEDQNKGGSESDELANGEVGGDRSEK) are disordered. The residue at position 1428 (serine 1428) is a Phosphoserine. Positions 1484–1636 (NLEDQIKKLE…TQKMAMMQEE (153 aa)) form a coiled coil. Positions 1639–1905 (IVKPMPGRPN…DCSPALKQSP (267 aa)) are disordered. A compositionally biased stretch (polar residues) spans 1647 to 1664 (PNTQNPPRRGPLSQNGSF). Residues serine 1663, serine 1675, serine 1703, serine 1724, serine 1738, and serine 1742 each carry the phosphoserine modification. Positions 1748-1905 (DEGKVSMAAK…DCSPALKQSP (158 aa)) are proline-rich domain (PRD); mediates interaction with the COPII coat subunits SEC23A and SEC23B. A compositionally biased stretch (pro residues) spans 1776 to 1806 (LLPPIRYGPPPQLCGPFGPRPLPPPFGPGMR). An Asymmetric dimethylarginine modification is found at arginine 1781. The interval 1785–1845 (PPQLCGPFGP…GHAPFRPLGS (61 aa)) is SEC16A-interacting region (SIR); required for its localization to endoplasmic reticulum exit sites and for its interaction with SEC16A. The segment covering 1821-1831 (GKRDLPLDPRE) has biased composition (basic and acidic residues). 2 positions are modified to phosphoserine: serine 1890 and serine 1904. Over residues 1891–1905 (QGASQDCSPALKQSP) the composition is skewed to polar residues.

This sequence belongs to the MIA/OTOR family. Tango1 subfamily. As to quaternary structure, interacts with MIA2. Interacts (via SH3 domain) with COL7A1. Interacts with the COPII coat subunits SEC23A, SEC23B and maybe SEC24C. May interact with APOB and MIA2. Interacts with SEC16A.

The protein resides in the endoplasmic reticulum membrane. In terms of biological role, plays a role in the transport of cargos that are too large to fit into COPII-coated vesicles and require specific mechanisms to be incorporated into membrane-bound carriers and exported from the endoplasmic reticulum. This protein is required for collagen VII (COL7A1) secretion by loading COL7A1 into transport carriers. It may participate in cargo loading of COL7A1 at endoplasmic reticulum exit sites by binding to COPII coat subunits Sec23/24 and guiding SH3-bound COL7A1 into a growing carrier. Does not play a role in global protein secretion and is apparently specific to COL7A1 cargo loading. However, it may participate in secretion of other proteins in cells that do not secrete COL7A1. It is also specifically required for the secretion of lipoproteins by participating in their export from the endoplasmic reticulum. Required for correct assembly of COPII coat components at endoplasmic reticulum exit sites (ERES) and for the localization of SEC16A and membrane-bound ER-resident complexes consisting of MIA2 and PREB/SEC12 to ERES. The protein is Transport and Golgi organization protein 1 homolog of Bos taurus (Bovine).